A 312-amino-acid chain; its full sequence is Ribosomal protein L11 methyltransferase (312 aa).

S-adenosyl-L-methionine-binding residues include threonine 162, glycine 183, aspartate 205, and asparagine 248.

Belongs to the methyltransferase superfamily. PrmA family.

The protein resides in the cytoplasm. The enzyme catalyses L-lysyl-[protein] + 3 S-adenosyl-L-methionine = N(6),N(6),N(6)-trimethyl-L-lysyl-[protein] + 3 S-adenosyl-L-homocysteine + 3 H(+). Its function is as follows. Methylates ribosomal protein L11. This is Ribosomal protein L11 methyltransferase from Geobacillus thermodenitrificans (strain NG80-2).